The chain runs to 130 residues: D-ribose pyranase (130 aa).

Residue His-20 is the Proton donor of the active site. Residues Asp-28, His-97, and 119–121 each bind substrate; that span reads YAN.

This sequence belongs to the RbsD / FucU family. RbsD subfamily. In terms of assembly, homodecamer.

It localises to the cytoplasm. The catalysed reaction is beta-D-ribopyranose = beta-D-ribofuranose. Its pathway is carbohydrate metabolism; D-ribose degradation; D-ribose 5-phosphate from beta-D-ribopyranose: step 1/2. Its function is as follows. Catalyzes the interconversion of beta-pyran and beta-furan forms of D-ribose. This Thermoanaerobacter pseudethanolicus (strain ATCC 33223 / 39E) (Clostridium thermohydrosulfuricum) protein is D-ribose pyranase.